The chain runs to 105 residues: Large ribosomal subunit protein eL42 (105 aa).

The interval 28–57 (YKKGKDSLAAQGKRRYDRKQSGYGGQTKPV) is disordered.

The protein belongs to the eukaryotic ribosomal protein eL42 family.

This Gossypium hirsutum (Upland cotton) protein is Large ribosomal subunit protein eL42 (RPL44).